The sequence spans 219 residues: Segregation and condensation protein B (219 aa).

The disordered stretch occupies residues 193-219 (SLFAGGEEPSAEAADGGAGESTHGEEE). A compositionally biased stretch (low complexity) spans 196–207 (AGGEEPSAEAAD).

This sequence belongs to the ScpB family. As to quaternary structure, homodimer. Homodimerization may be required to stabilize the binding of ScpA to the Smc head domains. Component of a cohesin-like complex composed of ScpA, ScpB and the Smc homodimer, in which ScpA and ScpB bind to the head domain of Smc. The presence of the three proteins is required for the association of the complex with DNA.

The protein localises to the cytoplasm. Functionally, participates in chromosomal partition during cell division. May act via the formation of a condensin-like complex containing Smc and ScpA that pull DNA away from mid-cell into both cell halves. The sequence is that of Segregation and condensation protein B from Symbiobacterium thermophilum (strain DSM 24528 / JCM 14929 / IAM 14863 / T).